A 55-amino-acid polypeptide reads, in one-letter code: UPF0391 membrane protein RSp1666 (55 aa).

The next 2 helical transmembrane spans lie at A5–A25 and I33–G53.

The protein belongs to the UPF0391 family.

It localises to the cell membrane. The protein is UPF0391 membrane protein RSp1666 of Ralstonia nicotianae (strain ATCC BAA-1114 / GMI1000) (Ralstonia solanacearum).